The following is a 253-amino-acid chain: Trans-aconitate 2-methyltransferase (253 aa).

Belongs to the methyltransferase superfamily. Tam family.

The protein resides in the cytoplasm. The catalysed reaction is trans-aconitate + S-adenosyl-L-methionine = (E)-3-(methoxycarbonyl)pent-2-enedioate + S-adenosyl-L-homocysteine. Functionally, catalyzes the S-adenosylmethionine monomethyl esterification of trans-aconitate. The polypeptide is Trans-aconitate 2-methyltransferase (Klebsiella pneumoniae (strain 342)).